The sequence spans 389 residues: Chalcone synthase (389 aa).

Cys164 is a catalytic residue.

This sequence belongs to the thiolase-like superfamily. Chalcone/stilbene synthases family.

The catalysed reaction is (E)-4-coumaroyl-CoA + 3 malonyl-CoA + 3 H(+) = 2',4,4',6'-tetrahydroxychalcone + 3 CO2 + 4 CoA. It functions in the pathway secondary metabolite biosynthesis; flavonoid biosynthesis. The primary product of this enzyme is 4,2',4',6'-tetrahydroxychalcone (also termed naringenin-chalcone or chalcone) which can under specific conditions spontaneously isomerize into naringenin. The sequence is that of Chalcone synthase (CHS) from Pueraria montana var. lobata (Kudzu vine).